We begin with the raw amino-acid sequence, 102 residues long: U3-aranetoxin-Ce1a (102 aa).

Residues 1–21 (MKHLSIFFVFFCCICVMLCDA) form the signal peptide.

Belongs to the neurotoxin 20 family. Expressed by the venom gland.

The protein resides in the secreted. This is U3-aranetoxin-Ce1a from Caerostris extrusa (Bark spider).